The sequence spans 218 residues: Probable GTP-binding protein EngB (218 aa).

In terms of domain architecture, EngB-type G spans 23-200 (EVPEIAFVGR…AQLLWQWAHP (178 aa)). Residues 31–38 (GRSNAGKS), 58–62 (GRTQH), 80–83 (DLPG), 150–153 (TKAD), and 179–181 (FSA) each bind GTP. Mg(2+)-binding residues include S38 and T60.

Belongs to the TRAFAC class TrmE-Era-EngA-EngB-Septin-like GTPase superfamily. EngB GTPase family. Requires Mg(2+) as cofactor.

Functionally, necessary for normal cell division and for the maintenance of normal septation. The sequence is that of Probable GTP-binding protein EngB from Acidovorax ebreus (strain TPSY) (Diaphorobacter sp. (strain TPSY)).